The sequence spans 194 residues: 5'-deoxynucleotidase VV1113 (194 aa).

Residues 18-19 (RW) and histidine 33 contribute to the substrate site. Residues 30–142 (VSEHSLQVAF…VKQADSICAY (113 aa)) form the HD domain. Residues histidine 33, histidine 68, and aspartate 69 each coordinate a divalent metal cation. Substrate contacts are provided by residues aspartate 69, 77-80 (DLPT), and aspartate 137. Aspartate 137 contributes to the a divalent metal cation binding site.

The protein belongs to the 5DNU family. Homodimer. The cofactor is a divalent metal cation.

The protein localises to the cytoplasm. The enzyme catalyses a 2'-deoxyribonucleoside 5'-phosphate + H2O = a 2'-deoxyribonucleoside + phosphate. Catalyzes the strictly specific dephosphorylation of 2'-deoxyribonucleoside 5'-monophosphates. In Vibrio vulnificus (strain YJ016), this protein is 5'-deoxynucleotidase VV1113.